We begin with the raw amino-acid sequence, 432 residues long: Trigger factor (432 aa).

Positions 161 to 246 constitute a PPIase FKBP-type domain; sequence DDRVTIDFVG…LKKVENMVLP (86 aa).

The protein belongs to the FKBP-type PPIase family. Tig subfamily.

The protein localises to the cytoplasm. The enzyme catalyses [protein]-peptidylproline (omega=180) = [protein]-peptidylproline (omega=0). In terms of biological role, involved in protein export. Acts as a chaperone by maintaining the newly synthesized protein in an open conformation. Functions as a peptidyl-prolyl cis-trans isomerase. This chain is Trigger factor, found in Haemophilus influenzae (strain PittGG).